The following is a 350-amino-acid chain: DNA polymerase delta subunit 3 (350 aa).

The interval 131-350 (EEKSKPLVRP…LESFFKRKAK (220 aa)) is disordered. Basic and acidic residues-rich tracts occupy residues 146–162 (TTPE…KDMG) and 172–195 (MKKD…EENL). Threonine 223 is subject to Phosphothreonine. Position 230 is a phosphoserine (serine 230). Residues 234–248 (SPKETDSNDKDKNND) show a composition bias toward basic and acidic residues. Residues 249 to 262 (DLEDLLETTAEDSL) are compositionally biased toward acidic residues. The segment covering 274–286 (SETEHSKEPKSEE) has biased composition (basic and acidic residues). A compositionally biased stretch (polar residues) spans 320–332 (LSSSKKQETPSSN).

In terms of assembly, DNA polymerase delta is a heterotrimer of POL3, POL32 and HYS2. POL32 can form homodimers.

Its subcellular location is the nucleus. In terms of biological role, DNA polymerase delta (DNA polymerase III) participates in chromosomal DNA replication. It is required during synthesis of the leading and lagging DNA strands at the replication fork and binds at/or near replication origins and moves along DNA with the replication fork. It has 3'-5' proofreading exonuclease activity that correct errors arising during DNA replication. It is also involved in DNA synthesis during DNA repair. In Saccharomyces cerevisiae (strain ATCC 204508 / S288c) (Baker's yeast), this protein is DNA polymerase delta subunit 3 (POL32).